The chain runs to 38 residues: Large ribosomal subunit protein bL36 (38 aa).

This sequence belongs to the bacterial ribosomal protein bL36 family.

The chain is Large ribosomal subunit protein bL36 from Hamiltonella defensa subsp. Acyrthosiphon pisum (strain 5AT).